The following is a 515-amino-acid chain: Maturase K (515 aa).

Belongs to the intron maturase 2 family. MatK subfamily.

Its subcellular location is the plastid. It is found in the chloroplast. In terms of biological role, usually encoded in the trnK tRNA gene intron. Probably assists in splicing its own and other chloroplast group II introns. This is Maturase K from Picea pungens (Colorado spruce).